The sequence spans 496 residues: Membrane-bound lytic murein transglycosylase F (496 aa).

The N-terminal stretch at 1–29 (MFFRPDFRPRCAKWLIATGLFLMLGACVE) is a signal peptide. Positions 30–267 (KPTTLERVKE…RLKDRYYGHV (238 aa)) are non-LT domain. Residues 268-496 (DVLGYVGAYT…SGSSPDKPAL (229 aa)) form an LT domain region. Glu314 is an active-site residue. Residues 464-496 (VADGNLHVPGVDKTQPPAPPAPASGSSPDKPAL) are disordered. The segment covering 486-496 (ASGSSPDKPAL) has biased composition (low complexity).

In the N-terminal section; belongs to the bacterial solute-binding protein 3 family. This sequence in the C-terminal section; belongs to the transglycosylase Slt family.

It localises to the cell outer membrane. It carries out the reaction Exolytic cleavage of the (1-&gt;4)-beta-glycosidic linkage between N-acetylmuramic acid (MurNAc) and N-acetylglucosamine (GlcNAc) residues in peptidoglycan, from either the reducing or the non-reducing ends of the peptidoglycan chains, with concomitant formation of a 1,6-anhydrobond in the MurNAc residue.. In terms of biological role, murein-degrading enzyme that degrades murein glycan strands and insoluble, high-molecular weight murein sacculi, with the concomitant formation of a 1,6-anhydromuramoyl product. Lytic transglycosylases (LTs) play an integral role in the metabolism of the peptidoglycan (PG) sacculus. Their lytic action creates space within the PG sacculus to allow for its expansion as well as for the insertion of various structures such as secretion systems and flagella. The protein is Membrane-bound lytic murein transglycosylase F of Pseudomonas savastanoi pv. phaseolicola (strain 1448A / Race 6) (Pseudomonas syringae pv. phaseolicola (strain 1448A / Race 6)).